A 127-amino-acid polypeptide reads, in one-letter code: Phosphoribosyl-AMP cyclohydrolase (127 aa).

D75 contributes to the Mg(2+) binding site. Zn(2+) is bound at residue C76. D77 and D79 together coordinate Mg(2+). Zn(2+) is bound by residues C93 and C100.

The protein belongs to the PRA-CH family. In terms of assembly, homodimer. The cofactor is Mg(2+). Zn(2+) serves as cofactor.

It localises to the cytoplasm. It carries out the reaction 1-(5-phospho-beta-D-ribosyl)-5'-AMP + H2O = 1-(5-phospho-beta-D-ribosyl)-5-[(5-phospho-beta-D-ribosylamino)methylideneamino]imidazole-4-carboxamide. It functions in the pathway amino-acid biosynthesis; L-histidine biosynthesis; L-histidine from 5-phospho-alpha-D-ribose 1-diphosphate: step 3/9. Functionally, catalyzes the hydrolysis of the adenine ring of phosphoribosyl-AMP. This is Phosphoribosyl-AMP cyclohydrolase from Desulfotalea psychrophila (strain LSv54 / DSM 12343).